Reading from the N-terminus, the 93-residue chain is UPF0728 protein C10orf53 homolog (93 aa).

The protein belongs to the UPF0728 family.

This chain is UPF0728 protein C10orf53 homolog, found in Bos taurus (Bovine).